Consider the following 245-residue polypeptide: tRNA pseudouridine synthase A (245 aa).

Asp-52 (nucleophile) is an active-site residue. Tyr-111 contacts substrate.

This sequence belongs to the tRNA pseudouridine synthase TruA family. Homodimer.

The catalysed reaction is uridine(38/39/40) in tRNA = pseudouridine(38/39/40) in tRNA. Formation of pseudouridine at positions 38, 39 and 40 in the anticodon stem and loop of transfer RNAs. This is tRNA pseudouridine synthase A from Wolbachia sp. subsp. Drosophila simulans (strain wRi).